A 425-amino-acid chain; its full sequence is Glutamyl-tRNA reductase (425 aa).

Substrate is bound by residues 49-52 (TCNR), Ser109, 114-116 (EGQ), and Gln120. Cys50 acts as the Nucleophile in catalysis. 189 to 194 (GAGKMS) is an NADP(+) binding site.

This sequence belongs to the glutamyl-tRNA reductase family. Homodimer.

The catalysed reaction is (S)-4-amino-5-oxopentanoate + tRNA(Glu) + NADP(+) = L-glutamyl-tRNA(Glu) + NADPH + H(+). It functions in the pathway porphyrin-containing compound metabolism; protoporphyrin-IX biosynthesis; 5-aminolevulinate from L-glutamyl-tRNA(Glu): step 1/2. The protein operates within porphyrin-containing compound metabolism; chlorophyll biosynthesis. Catalyzes the NADPH-dependent reduction of glutamyl-tRNA(Glu) to glutamate 1-semialdehyde (GSA). This Picosynechococcus sp. (strain ATCC 27264 / PCC 7002 / PR-6) (Agmenellum quadruplicatum) protein is Glutamyl-tRNA reductase.